Reading from the N-terminus, the 395-residue chain is NAD(P)H-quinone oxidoreductase subunit H (395 aa).

The protein belongs to the complex I 49 kDa subunit family. In terms of assembly, NDH-1 can be composed of about 15 different subunits; different subcomplexes with different compositions have been identified which probably have different functions.

The protein localises to the cellular thylakoid membrane. The enzyme catalyses a plastoquinone + NADH + (n+1) H(+)(in) = a plastoquinol + NAD(+) + n H(+)(out). It catalyses the reaction a plastoquinone + NADPH + (n+1) H(+)(in) = a plastoquinol + NADP(+) + n H(+)(out). Its function is as follows. NDH-1 shuttles electrons from an unknown electron donor, via FMN and iron-sulfur (Fe-S) centers, to quinones in the respiratory and/or the photosynthetic chain. The immediate electron acceptor for the enzyme in this species is believed to be plastoquinone. Couples the redox reaction to proton translocation, and thus conserves the redox energy in a proton gradient. Cyanobacterial NDH-1 also plays a role in inorganic carbon-concentration. The polypeptide is NAD(P)H-quinone oxidoreductase subunit H (Prochlorococcus marinus subsp. pastoris (strain CCMP1986 / NIES-2087 / MED4)).